A 142-amino-acid polypeptide reads, in one-letter code: Hemoglobin subunit pi (142 aa).

The Globin domain maps to alanine 2–arginine 142. 2 residues coordinate heme b: histidine 59 and histidine 88.

This sequence belongs to the globin family.

Functionally, the pi' chain is the counterpart of the alpha chain in the major early embryonic hemoglobin P. The polypeptide is Hemoglobin subunit pi (Gallus gallus (Chicken)).